Reading from the N-terminus, the 704-residue chain is MAQAENACRLKLLRADVPVDLLPAGCSATDLQPAVNVKEKIEVNGESRLVQKKKTLYPEWEKCWDTAVAEGRILQIVLMFNQTPVVEATMRLEDIISKCKSDAITHIWINTKPNGRILAQTRHLKNAPDDDHPVEDIMTSRSNSGPGIQRRRGAIKHARVHEIRGHQFVATFFRQPHFCSLCSDFMWGLNKQGYQCQLCSAAVHKKCHEKVIMQCPGSAKNTKETMALKERFKVDIPHRFKTYNFKSPTFCDHCGSMLYGLFKQGLRCEVCNVACHHKCERLMSNLCGVNQKQLSEMYHEIKRGTHATASCPPNIANLHLNGETSKNNGSLPNKLKNLFKSHQYSVEEQKETDEYMDNIWGGGDGPVKKFALPHFNLLKVLGKGSFGKVMLVELKGKNEFYAMKCLKKDVILEDDDTECTYIERRVLILASQCPFLCQLFCSFQTNEYLFFVMEYLNGGDLMHHIQQIKKFDEARTRFYACEIVVALQFLHTNNIIYRDLKLDNVLLDCDGHIKLADFGMAKTEMNRENGMASTFCGTPDYISPEIIKGQLYNEAVDFWSFGVLMYEMLVGQSPFHGEGEDELFDSILNERPYFPKTISKEAAKCLSALFDRNPNTRLGMPECPDGPIRQHCFFRGVDWKRFENRQVPPPFKPNIKSNSDASNFDDDFTNEKAALTPVHDKNLLASIDPEAFLNFSYTNPHFSK.

A phosphothreonine; by autocatalysis mark is found at Thr89 and Thr139. 2 Phorbol-ester/DAG-type zinc fingers span residues 165–215 (GHQF…IMQC) and 237–287 (PHRF…SNLC). Position 324 is a phosphothreonine; by autocatalysis (Thr324). A Protein kinase domain is found at 375-634 (FNLLKVLGKG…DGPIRQHCFF (260 aa)). ATP-binding positions include 381-389 (LGKGSFGKV) and Lys404. Catalysis depends on Asp499, which acts as the Proton acceptor. The AGC-kinase C-terminal domain occupies 635 to 704 (RGVDWKRFEN…FSYTNPHFSK (70 aa)).

The protein belongs to the protein kinase superfamily. AGC Ser/Thr protein kinase family. PKC subfamily.

The enzyme catalyses L-seryl-[protein] + ATP = O-phospho-L-seryl-[protein] + ADP + H(+). It carries out the reaction L-threonyl-[protein] + ATP = O-phospho-L-threonyl-[protein] + ADP + H(+). In terms of biological role, diacylglycerol (DAG)-dependent serine/threonine-protein kinase that phosphorylates a range of cellular proteins. Phosphorylates mlk-1, a component of the JNK pathway. Involved in axon regeneration after injury probably by activating the JNK pathway. Plays a role in resistance to fungal infection and in wound healing by promoting expression of antimicrobial peptide nlp-29 in the epidermis downstream of gpa-12 and plc-3 and upstream of tir-1-p38-like pathway. Probably by regulating neuronal transmission in ALA neurons, regulates the decrease in pharyngeal pumping during the quiescent state that precedes each larval molt, downstream of lin-3 and receptor let-23 and phospholipase plc-3. The sequence is that of Protein kinase C-like 1 (tpa-1) from Caenorhabditis elegans.